Here is a 386-residue protein sequence, read N- to C-terminus: Formate-dependent phosphoribosylglycinamide formyltransferase (386 aa).

N(1)-(5-phospho-beta-D-ribosyl)glycinamide is bound by residues 15-16 (EL) and E75. Residues R107, K148, 153–158 (SSGKGQ), 188–191 (EQFI), and E196 each bind ATP. Residues 112–301 (ALAAQQLNLQ…EFELHLRAIV (190 aa)) form the ATP-grasp domain. Mg(2+) contacts are provided by E260 and E272. Residues D279, K349, and 356–357 (RR) each bind N(1)-(5-phospho-beta-D-ribosyl)glycinamide.

The protein belongs to the PurK/PurT family. In terms of assembly, homodimer.

It catalyses the reaction N(1)-(5-phospho-beta-D-ribosyl)glycinamide + formate + ATP = N(2)-formyl-N(1)-(5-phospho-beta-D-ribosyl)glycinamide + ADP + phosphate + H(+). The protein operates within purine metabolism; IMP biosynthesis via de novo pathway; N(2)-formyl-N(1)-(5-phospho-D-ribosyl)glycinamide from N(1)-(5-phospho-D-ribosyl)glycinamide (formate route): step 1/1. Involved in the de novo purine biosynthesis. Catalyzes the transfer of formate to 5-phospho-ribosyl-glycinamide (GAR), producing 5-phospho-ribosyl-N-formylglycinamide (FGAR). Formate is provided by PurU via hydrolysis of 10-formyl-tetrahydrofolate. The sequence is that of Formate-dependent phosphoribosylglycinamide formyltransferase from Francisella tularensis subsp. novicida (strain U112).